The following is a 267-amino-acid chain: Putative N-acetylmuramoyl-L-alanine amidase RC0497 (267 aa).

Positions 1–25 are disordered; it reads MSKSKAIENNGISNTNSPNGKYMAP. The segment covering 10-19 has biased composition (polar residues); sequence NGISNTNSPN. The region spanning 33-141 is the N-acetylmuramoyl-L-alanine amidase domain; sequence TCVVITYSVS…NLDLKHDLVG (109 aa).

It belongs to the N-acetylmuramoyl-L-alanine amidase 2 family.

The protein resides in the secreted. The enzyme catalyses Hydrolyzes the link between N-acetylmuramoyl residues and L-amino acid residues in certain cell-wall glycopeptides.. The protein is Putative N-acetylmuramoyl-L-alanine amidase RC0497 of Rickettsia conorii (strain ATCC VR-613 / Malish 7).